The following is a 550-amino-acid chain: Chaperonin GroEL 2 (550 aa).

ATP contacts are provided by residues Thr30 to Pro33, Lys51, Asp87 to Thr91, Gly415, and Asp496.

This sequence belongs to the chaperonin (HSP60) family. In terms of assembly, forms a cylinder of 14 subunits composed of two heptameric rings stacked back-to-back. Interacts with the co-chaperonin GroES.

It localises to the cytoplasm. It carries out the reaction ATP + H2O + a folded polypeptide = ADP + phosphate + an unfolded polypeptide.. Together with its co-chaperonin GroES, plays an essential role in assisting protein folding. The GroEL-GroES system forms a nano-cage that allows encapsulation of the non-native substrate proteins and provides a physical environment optimized to promote and accelerate protein folding. This chain is Chaperonin GroEL 2, found in Bradyrhizobium diazoefficiens (strain JCM 10833 / BCRC 13528 / IAM 13628 / NBRC 14792 / USDA 110).